A 228-amino-acid chain; its full sequence is PKHD-type hydroxylase xcc-b100_1388 (228 aa).

The 103-residue stretch at 78 to 180 (RIYPPLFNRY…RVASFFWIQS (103 aa)) folds into the Fe2OG dioxygenase domain. Positions 96, 98, and 161 each coordinate Fe cation. Arg171 serves as a coordination point for 2-oxoglutarate.

It depends on Fe(2+) as a cofactor. Requires L-ascorbate as cofactor.

The polypeptide is PKHD-type hydroxylase xcc-b100_1388 (Xanthomonas campestris pv. campestris (strain B100)).